Reading from the N-terminus, the 687-residue chain is Threonine--tRNA ligase (687 aa).

The TGS domain maps to 1-67; that stretch reads MAHLIEAAPN…EQDSKFTPVP (67 aa). Positions 266–572 are catalytic; sequence DHRRLGAELD…LLEHYAGAFP (307 aa). Positions 371, 422, and 549 each coordinate Zn(2+).

It belongs to the class-II aminoacyl-tRNA synthetase family. In terms of assembly, homodimer. It depends on Zn(2+) as a cofactor.

Its subcellular location is the cytoplasm. It carries out the reaction tRNA(Thr) + L-threonine + ATP = L-threonyl-tRNA(Thr) + AMP + diphosphate + H(+). Functionally, catalyzes the attachment of threonine to tRNA(Thr) in a two-step reaction: L-threonine is first activated by ATP to form Thr-AMP and then transferred to the acceptor end of tRNA(Thr). Also edits incorrectly charged L-seryl-tRNA(Thr). The polypeptide is Threonine--tRNA ligase (Corynebacterium diphtheriae (strain ATCC 700971 / NCTC 13129 / Biotype gravis)).